The primary structure comprises 809 residues: Phenylalanine--tRNA ligase beta subunit (809 aa).

In terms of domain architecture, tRNA-binding spans 39-152 (KDKWPNVYVG…ADALVGMLAS (114 aa)). A B5 domain is found at 404 to 492 (KERNGIVLSL…RIAGYHTIPC (89 aa)). 4 residues coordinate Mg(2+): aspartate 470, aspartate 476, glutamate 479, and glutamate 480. Residues 717–808 (NRFPAVERDL…LNTETGAVLR (92 aa)) enclose the FDX-ACB domain.

Belongs to the phenylalanyl-tRNA synthetase beta subunit family. Type 1 subfamily. As to quaternary structure, tetramer of two alpha and two beta subunits. Mg(2+) serves as cofactor.

It is found in the cytoplasm. The enzyme catalyses tRNA(Phe) + L-phenylalanine + ATP = L-phenylalanyl-tRNA(Phe) + AMP + diphosphate + H(+). The polypeptide is Phenylalanine--tRNA ligase beta subunit (Dehalococcoides mccartyi (strain CBDB1)).